Here is a 426-residue protein sequence, read N- to C-terminus: Serine--tRNA ligase (426 aa).

Residue 233–235 coordinates L-serine; it reads TAE. 264–266 serves as a coordination point for ATP; that stretch reads RSE. Glutamate 287 lines the L-serine pocket. 351–354 serves as a coordination point for ATP; that stretch reads EISS. Serine 387 is a binding site for L-serine.

This sequence belongs to the class-II aminoacyl-tRNA synthetase family. Type-1 seryl-tRNA synthetase subfamily. In terms of assembly, homodimer. The tRNA molecule binds across the dimer.

The protein localises to the cytoplasm. The catalysed reaction is tRNA(Ser) + L-serine + ATP = L-seryl-tRNA(Ser) + AMP + diphosphate + H(+). It carries out the reaction tRNA(Sec) + L-serine + ATP = L-seryl-tRNA(Sec) + AMP + diphosphate + H(+). The protein operates within aminoacyl-tRNA biosynthesis; selenocysteinyl-tRNA(Sec) biosynthesis; L-seryl-tRNA(Sec) from L-serine and tRNA(Sec): step 1/1. Its function is as follows. Catalyzes the attachment of serine to tRNA(Ser). Is also able to aminoacylate tRNA(Sec) with serine, to form the misacylated tRNA L-seryl-tRNA(Sec), which will be further converted into selenocysteinyl-tRNA(Sec). The sequence is that of Serine--tRNA ligase from Clostridium botulinum (strain Okra / Type B1).